Reading from the N-terminus, the 400-residue chain is Nicotinate phosphoribosyltransferase (400 aa).

His220 carries the post-translational modification Phosphohistidine; by autocatalysis.

It belongs to the NAPRTase family. In terms of processing, transiently phosphorylated on a His residue during the reaction cycle. Phosphorylation strongly increases the affinity for substrates and increases the rate of nicotinate D-ribonucleotide production. Dephosphorylation regenerates the low-affinity form of the enzyme, leading to product release.

It catalyses the reaction nicotinate + 5-phospho-alpha-D-ribose 1-diphosphate + ATP + H2O = nicotinate beta-D-ribonucleotide + ADP + phosphate + diphosphate. It participates in cofactor biosynthesis; NAD(+) biosynthesis; nicotinate D-ribonucleotide from nicotinate: step 1/1. In terms of biological role, catalyzes the synthesis of beta-nicotinate D-ribonucleotide from nicotinate and 5-phospho-D-ribose 1-phosphate at the expense of ATP. This chain is Nicotinate phosphoribosyltransferase, found in Cronobacter sakazakii (strain ATCC BAA-894) (Enterobacter sakazakii).